We begin with the raw amino-acid sequence, 339 residues long: NADH-quinone oxidoreductase subunit H (339 aa).

Transmembrane regions (helical) follow at residues 9 to 29 (IFPLIIIALKVVAITTPLILC), 50 to 70 (PNVVGPFGLLQPIADAVKLLF), 82 to 102 (ILFILAPMITFILSLIGWAVI), 115 to 135 (VGVLYILAISSLSVYGIIIAG), 161 to 181 (MGLVIITVLLTTGTLNLSEII), 187 to 207 (MPWWIDLMLLPMGVVFFISVL), 235 to 255 (MGFALFFLGEYANMILVSAMT), 275 to 295 (IPGFFWFVFKVGFLLFCFLWI), and 311 to 331 (GWKVFLPLTLFWVVLVSSVLV).

This sequence belongs to the complex I subunit 1 family. As to quaternary structure, NDH-1 is composed of 14 different subunits. Subunits NuoA, H, J, K, L, M, N constitute the membrane sector of the complex.

It is found in the cell inner membrane. The catalysed reaction is a quinone + NADH + 5 H(+)(in) = a quinol + NAD(+) + 4 H(+)(out). Functionally, NDH-1 shuttles electrons from NADH, via FMN and iron-sulfur (Fe-S) centers, to quinones in the respiratory chain. The immediate electron acceptor for the enzyme in this species is believed to be ubiquinone. Couples the redox reaction to proton translocation (for every two electrons transferred, four hydrogen ions are translocated across the cytoplasmic membrane), and thus conserves the redox energy in a proton gradient. This subunit may bind ubiquinone. The polypeptide is NADH-quinone oxidoreductase subunit H (Rickettsia peacockii (strain Rustic)).